A 286-amino-acid polypeptide reads, in one-letter code: Nucleotide-binding protein HS_1178 (286 aa).

8–15 (GRSGAGKS) serves as a coordination point for ATP. GTP is bound at residue 56-59 (DIRN).

It belongs to the RapZ-like family.

In terms of biological role, displays ATPase and GTPase activities. The sequence is that of Nucleotide-binding protein HS_1178 from Histophilus somni (strain 129Pt) (Haemophilus somnus).